The following is an 825-amino-acid chain: AP-3 complex subunit delta (825 aa).

10 HEAT repeats span residues 131–168 (GLAR…QYPE), 169–205 (AISA…RAPK), 207–243 (YLEF…YEPR), 244–281 (LVKK…LVGH), 285–323 (DKLA…THPS), 324–360 (LVSA…KENI), 363–400 (IVKT…KSTY), 469–513 (EKRT…LAHR), 515–547 (LLQA…LWVE), and 548–584 (KIVS…IVNT). The interval 787 to 825 (STNQGSMGDIVLETKSPIRVEKKKSKKKKKKKEKTSGKE) is disordered. A compositionally biased stretch (basic residues) spans 807–819 (EKKKSKKKKKKKE).

It belongs to the adaptor complexes large subunit family. In terms of assembly, adaptor protein complex 3 (AP-3) is a heterotetramer composed of 2 large adaptins (apl5 and apl6), a medium adaptin (apm3) and a small adaptin (aps3).

Its subcellular location is the golgi apparatus. It localises to the cytoplasmic vesicle. It is found in the clathrin-coated vesicle membrane. Functionally, part of the AP-3 complex, an adaptor-related complex which is not clathrin-associated. The complex is associated with the Golgi region as well as more peripheral structures. It facilitates the budding of vesicles from the Golgi membrane and may be directly involved in trafficking to the vacuole. The chain is AP-3 complex subunit delta (apl5) from Schizosaccharomyces pombe (strain 972 / ATCC 24843) (Fission yeast).